Reading from the N-terminus, the 436-residue chain is POU domain, class 2, transcription factor 3 (436 aa).

Disordered regions lie at residues 1-40 (MVNL…NGLD), 140-186 (QTGP…DEPS), and 256-278 (AESS…SEVF). The region spanning 183–257 (DEPSDLEELE…LLEKWLNDAE (75 aa)) is the POU-specific domain. Residues 258 to 275 (SSPSDPSVSTPSSYPSLS) show a composition bias toward low complexity. The homeobox DNA-binding region spans 281–340 (KRKKRTSIETNIRLTLEKRFQDNPKPSSEEISMIAEQLSMEKEVVRVWFCNRRQKEKRIN). Positions 363–421 (LGPLSVPPVHSTMPGTVTSSCSPGNNSRPSSPGSGLHASSPTASQNNSKAAVNSASSFN) are disordered. Composition is skewed to low complexity over residues 381-397 (SSCS…PGSG) and 405-421 (ASQN…SSFN).

Belongs to the POU transcription factor family. Class-2 subfamily. As to quaternary structure, interacts (via the POU domain) with POU2AF1 and POU2AF2 in a DNA-dependent manner; this interaction recruits POU2AF2 to chromatin and increases POU2F3 transactivation activity. As to expression, specifically expressed in epidermis and cultured keratinocytes.

It localises to the nucleus. Functionally, transcription factor that binds to the octamer motif (5'-ATTTGCAT-3') and regulates cell type-specific differentiation pathways. Involved in the regulation of keratinocytes differentiation. The POU2F3-POU2AF2/POU2AF3 complex drives the expression of tuft-cell-specific genes, a rare chemosensory cells that coordinate immune and neural functions within mucosal epithelial tissues. This Homo sapiens (Human) protein is POU domain, class 2, transcription factor 3.